A 274-amino-acid chain; its full sequence is Glucosamine-6-phosphate deaminase (274 aa).

The active-site Proton acceptor; for enolization step is the Asp-72. Asp-141 functions as the For ring-opening step in the catalytic mechanism. Catalysis depends on His-143, which acts as the Proton acceptor; for ring-opening step. The active-site For ring-opening step is Glu-148.

The protein belongs to the glucosamine/galactosamine-6-phosphate isomerase family. As to quaternary structure, homohexamer.

The protein resides in the cytoplasm. The catalysed reaction is alpha-D-glucosamine 6-phosphate + H2O = beta-D-fructose 6-phosphate + NH4(+). The protein operates within nucleotide-sugar biosynthesis; UDP-N-acetyl-alpha-D-glucosamine biosynthesis; alpha-D-glucosamine 6-phosphate from D-fructose 6-phosphate: step 1/1. Functionally, catalyzes the reversible conversion of alpha-D-glucosamine 6-phosphate (GlcN-6P) into beta-D-fructose 6-phosphate (Fru-6P) and ammonium ion, a regulatory reaction step in de novo uridine diphosphate-N-acetyl-alpha-D-glucosamine (UDP-GlcNAc) biosynthesis via hexosamine pathway. In Drosophila pseudoobscura pseudoobscura (Fruit fly), this protein is Glucosamine-6-phosphate deaminase.